The sequence spans 465 residues: Uronate isomerase (465 aa).

Belongs to the metallo-dependent hydrolases superfamily. Uronate isomerase family.

The catalysed reaction is D-glucuronate = D-fructuronate. It catalyses the reaction aldehydo-D-galacturonate = keto-D-tagaturonate. It participates in carbohydrate metabolism; pentose and glucuronate interconversion. This is Uronate isomerase from Streptococcus equi subsp. equi (strain 4047).